The sequence spans 182 residues: UPF0148 protein VNG_2366C (182 aa).

The tract at residues 1-162 (MSNTDDGFDK…RASDADDPRT (162 aa)) is disordered. Composition is skewed to basic and acidic residues over residues 7-33 (GFDKEAAREELREKYNADQQDREETAR) and 47-62 (DHCDRCGTPLFRHDGE). The segment covering 105–122 (PDTSSSTAAATDDVPTAA) has biased composition (low complexity). Basic and acidic residues predominate over residues 153–162 (RASDADDPRT).

This sequence belongs to the UPF0148 family.

The polypeptide is UPF0148 protein VNG_2366C (Halobacterium salinarum (strain ATCC 700922 / JCM 11081 / NRC-1) (Halobacterium halobium)).